The following is a 530-amino-acid chain: Protein transport protein SEC9 (530 aa).

Residues 1 to 274 form a disordered region; the sequence is MGIKKMFQKK…QPANDYNLDL (274 aa). A compositionally biased stretch (basic and acidic residues) spans 8-22; that stretch reads QKKEPTEQEIREELS. 2 stretches are compositionally biased toward low complexity: residues 61–100 and 122–141; these read NPYA…NNGG and GSSP…SSNP. Residues 142–160 show a composition bias toward polar residues; the sequence is YGNNNGSRSSQNTSSPYAK. The span at 161–202 shows a compositional bias: low complexity; sequence STNNSSYSNSPYSGSTVNNGNRGGHSNNSNSSAGGNPYAAGG. Polar residues-rich tracts occupy residues 203 to 228 and 258 to 268; these read RSSQ…RQTQ and RNQQSSQQPAN. T-SNARE coiled-coil homology domains follow at residues 313–375 and 467–529; these read KFVK…VKEL and DDME…LNNI.

The protein belongs to the SNAP-25 family.

The protein localises to the membrane. Late secretory t-SNARE protein required for secretion and proper cytokinesis. Plays an important role in the secretion of virulence-associated extracellular enzymes and vesicle-mediated polarized hyphal growth. The sequence is that of Protein transport protein SEC9 (SEC9) from Candida albicans (strain SC5314 / ATCC MYA-2876) (Yeast).